A 481-amino-acid polypeptide reads, in one-letter code: ATP synthase subunit beta, chloroplastic (481 aa).

ATP is bound at residue 161 to 168 (GGAGVGKT).

This sequence belongs to the ATPase alpha/beta chains family. In terms of assembly, F-type ATPases have 2 components, CF(1) - the catalytic core - and CF(0) - the membrane proton channel. CF(1) has five subunits: alpha(3), beta(3), gamma(1), delta(1), epsilon(1). CF(0) has four main subunits: a(1), b(1), b'(1) and c(9-12).

The protein resides in the plastid. The protein localises to the chloroplast thylakoid membrane. The catalysed reaction is ATP + H2O + 4 H(+)(in) = ADP + phosphate + 5 H(+)(out). In terms of biological role, produces ATP from ADP in the presence of a proton gradient across the membrane. The catalytic sites are hosted primarily by the beta subunits. The chain is ATP synthase subunit beta, chloroplastic from Mesostigma viride (Green alga).